The primary structure comprises 325 residues: Eukaryotic translation initiation factor 3 subunit I (325 aa).

WD repeat units lie at residues 8–47, 50–91, 144–183, and 186–225; these read GHER…RLGT, GHTG…ALLK, CNDS…VLVN, and EHSR…HQKT. At T219 the chain carries Phosphothreonine. An N6-acetyllysine modification is found at K264. Residue K282 forms a Glycyl lysine isopeptide (Lys-Gly) (interchain with G-Cter in ubiquitin) linkage. One copy of the WD 5 repeat lies at 283–324; that stretch reads GHFGLINSVAFHPDGKSYSSGGEDGYVRIHYFDPQYFEFEFE. A Phosphotyrosine modification is found at Y308.

The protein belongs to the eIF-3 subunit I family. As to quaternary structure, component of the eukaryotic translation initiation factor 3 (eIF-3) complex, which is composed of 13 subunits: EIF3A, EIF3B, EIF3C, EIF3D, EIF3E, EIF3F, EIF3G, EIF3H, EIF3I, EIF3J, EIF3K, EIF3L and EIF3M. The eIF-3 complex appears to include 3 stable modules: module A is composed of EIF3A, EIF3B, EIF3G and EIF3I; module B is composed of EIF3F, EIF3H, and EIF3M; and module C is composed of EIF3C, EIF3D, EIF3E, EIF3K and EIF3L. EIF3C of module C binds EIF3B of module A and EIF3H of module B, thereby linking the three modules. EIF3J is a labile subunit that binds to the eIF-3 complex via EIF3B. The eIF-3 complex interacts with RPS6KB1 under conditions of nutrient depletion. Mitogenic stimulation leads to binding and activation of a complex composed of MTOR and RPTOR, leading to phosphorylation and release of RPS6KB1 and binding of EIF4B to eIF-3. In terms of processing, phosphorylated by TGF-beta type II receptor.

The protein resides in the cytoplasm. Component of the eukaryotic translation initiation factor 3 (eIF-3) complex, which is required for several steps in the initiation of protein synthesis. The eIF-3 complex associates with the 40S ribosome and facilitates the recruitment of eIF-1, eIF-1A, eIF-2:GTP:methionyl-tRNAi and eIF-5 to form the 43S pre-initiation complex (43S PIC). The eIF-3 complex stimulates mRNA recruitment to the 43S PIC and scanning of the mRNA for AUG recognition. The eIF-3 complex is also required for disassembly and recycling of post-termination ribosomal complexes and subsequently prevents premature joining of the 40S and 60S ribosomal subunits prior to initiation. The eIF-3 complex specifically targets and initiates translation of a subset of mRNAs involved in cell proliferation, including cell cycling, differentiation and apoptosis, and uses different modes of RNA stem-loop binding to exert either translational activation or repression. The polypeptide is Eukaryotic translation initiation factor 3 subunit I (Pongo abelii (Sumatran orangutan)).